The sequence spans 277 residues: Diaminopimelate epimerase (277 aa).

Substrate is bound by residues asparagine 11 and asparagine 62. Cysteine 71 acts as the Proton donor in catalysis. Substrate-binding positions include 72 to 73, asparagine 160, asparagine 193, and 211 to 212; these read GN and ER. The Proton acceptor role is filled by cysteine 220. Position 221–222 (221–222) interacts with substrate; it reads GT.

Belongs to the diaminopimelate epimerase family. In terms of assembly, homodimer.

The protein localises to the cytoplasm. The catalysed reaction is (2S,6S)-2,6-diaminopimelate = meso-2,6-diaminopimelate. The protein operates within amino-acid biosynthesis; L-lysine biosynthesis via DAP pathway; DL-2,6-diaminopimelate from LL-2,6-diaminopimelate: step 1/1. Functionally, catalyzes the stereoinversion of LL-2,6-diaminopimelate (L,L-DAP) to meso-diaminopimelate (meso-DAP), a precursor of L-lysine. This is Diaminopimelate epimerase from Methanococcus maripaludis (strain C5 / ATCC BAA-1333).